Reading from the N-terminus, the 184-residue chain is Acyl-homoserine-lactone synthase (184 aa).

Belongs to the autoinducer synthase family.

The catalysed reaction is a fatty acyl-[ACP] + S-adenosyl-L-methionine = an N-acyl-L-homoserine lactone + S-methyl-5'-thioadenosine + holo-[ACP] + H(+). Involved in the synthesis of the acyl-homoserine lactone (AHL) signal N-(3-hydroxydodecanoyl)-L-HSL (3-hydroxy-C(12)-HSL or OH-dDHL). Required for normal biofilm development. The protein is Acyl-homoserine-lactone synthase of Acinetobacter baumannii.